Here is a 246-residue protein sequence, read N- to C-terminus: Serine protease 1 (246 aa).

Positions Met1–Pro17 are cleaved as a signal peptide. A propeptide spans Val18–Lys23 (activation peptide). In terms of domain architecture, Peptidase S1 spans Ile24–Ala244. 6 disulfide bridges follow: Cys30/Cys160, Cys48/Cys64, Cys132/Cys233, Cys139/Cys206, Cys171/Cys185, and Cys196/Cys220. His63 serves as the catalytic Charge relay system. Residues Glu75, Asn77, Val80, and Glu85 each contribute to the Ca(2+) site. Asp107 functions as the Charge relay system in the catalytic mechanism. Substrate contacts are provided by residues Asp194 to Ser195, Gln197 to Gly198, and Ser200. Ser200 serves as the catalytic Charge relay system.

Belongs to the peptidase S1 family. Interacts with SERPINA1. Ca(2+) is required as a cofactor. Autocatalytic cleavage after Lys-23 leads to beta-trypsin by releasing a terminal hexapeptide. Subsequent cleavage after Lys-148 leads to alpha-trypsin. Further cleavage after Lys-193 yields pseudotrypsin. A cleavage may also occur after Arg-122. In terms of processing, not sulfated on tyrosine residue(s). In terms of tissue distribution, synthesized in the acinar cells of the pancreas.

It is found in the secreted. The protein localises to the extracellular space. It catalyses the reaction Preferential cleavage: Arg-|-Xaa, Lys-|-Xaa.. With respect to regulation, is inhibited by scorpion cyclotide trypsin inhibitor TopI1. The chain is Serine protease 1 (PRSS1) from Bos taurus (Bovine).